The following is a 187-amino-acid chain: EP300-interacting inhibitor of differentiation 1 (187 aa).

Residues M1–S118 form a disordered region. Acidic residues-rich tracts occupy residues L52–A63 and F93–Q116. The interaction with NR0B2 stretch occupies residues E54–A120. Residues L178 to E182 carry the LXCXE motif motif.

As to quaternary structure, interacts via its LXCXE motif with the entire pocket region of RB1. Interacts with EP300, NR0B2 and TRIM27. Post-translationally, ubiquitinated in U2OS osteosarcoma cells and is rapidly degraded by proteasome as cells exit the cell cycle exit. Widely expressed. Most abundantly expressed in heart, skeletal muscle, pancreas, brain and testis. Expressed at much lower levels in placenta and peripheral blood leukocyte. Barely detectable in lung. Also weakly expressed in lung carcinoma A-549 and various leukemia cell lines.

The protein resides in the nucleus. The protein localises to the cytoplasm. In terms of biological role, interacts with RB1 and EP300 and acts as a repressor of MYOD1 transactivation. Inhibits EP300 and CBP histone acetyltransferase activity. May be involved in coupling cell cycle exit to the transcriptional activation of genes required for cellular differentiation. May act as a candidate coinhibitory factor for NR0B2 that can be directly linked to transcription inhibitory mechanisms. This is EP300-interacting inhibitor of differentiation 1 from Homo sapiens (Human).